The sequence spans 827 residues: Glycerol-3-phosphate acyltransferase (827 aa).

Positions 325 to 330 (CHRSHM) match the HXXXXD motif motif.

It belongs to the GPAT/DAPAT family.

It localises to the cell inner membrane. It carries out the reaction sn-glycerol 3-phosphate + an acyl-CoA = a 1-acyl-sn-glycero-3-phosphate + CoA. It participates in phospholipid metabolism; CDP-diacylglycerol biosynthesis; CDP-diacylglycerol from sn-glycerol 3-phosphate: step 1/3. The polypeptide is Glycerol-3-phosphate acyltransferase (Shigella dysenteriae serotype 1 (strain Sd197)).